A 306-amino-acid polypeptide reads, in one-letter code: MRAEKRKKKKKILYTIIALIGIFVLSTGSYAYYLWHKAASTVANIHENINKSKKRDSAVDIDNHDPFSVLLMGVDERDGDKGRADSLIYMTVNPKTKTTEMVSIPRDTYTEIIGKGKMDKINHSYAFGGVQMTVDTVENFLDVPVDYFIKVNMESFKDVVDTLGGITVNSTFAFNYDGYSFGKGEITLNGKEALAYTRMRKEDPNGDFGRQNRQRQVIEGIINKGANISSITKFGDMFKVIENNVKTNLTFDDMWDIQSGYKEARSKVIQHELKGDGTKINGIYYYKADESSLSDITAELKESLNK.

At 1–11 the chain is on the cytoplasmic side; sequence MRAEKRKKKKK. A helical; Signal-anchor for type II membrane protein transmembrane segment spans residues 12 to 32; it reads ILYTIIALIGIFVLSTGSYAY. At 33 to 306 the chain is on the extracellular side; that stretch reads YLWHKAASTV…TAELKESLNK (274 aa).

Belongs to the LytR/CpsA/Psr (LCP) family.

The protein localises to the cell membrane. It functions in the pathway cell wall biogenesis. In terms of biological role, may catalyze the final step in cell wall teichoic acid biosynthesis, the transfer of the anionic cell wall polymers (APs) from their lipid-linked precursor to the cell wall peptidoglycan (PG). The chain is Polyisoprenyl-teichoic acid--peptidoglycan teichoic acid transferase TagU from Bacillus licheniformis (strain ATCC 14580 / DSM 13 / JCM 2505 / CCUG 7422 / NBRC 12200 / NCIMB 9375 / NCTC 10341 / NRRL NRS-1264 / Gibson 46).